The chain runs to 965 residues: 26S proteasome non-ATPase regulatory subunit 1 (965 aa).

PC repeat units lie at residues 380 to 413 (NAVA…EGFG), 418 to 452 (GAML…EPVR), 454 to 488 (GACL…VSGE), 489 to 523 (SAGI…DKTQ), 560 to 595 (TGIC…DVKR), 630 to 664 (GAAM…FVRK), 665 to 706 (GALL…SLVK), and 708 to 738 (GAII…DMGS). Over residues 836–856 (ASASSAAAAPSSSSTSGTAPA) the composition is skewed to low complexity. Disordered regions lie at residues 836-889 (ASAS…LQNP) and 943-965 (TPAS…INDF). Positions 863-882 (EVDQPGKSKKEKAPEKDTKP) are enriched in basic and acidic residues.

The protein belongs to the proteasome subunit S1 family.

Functionally, acts as a regulatory subunit of the 26 proteasome which is involved in the ATP-dependent degradation of ubiquitinated proteins. The chain is 26S proteasome non-ATPase regulatory subunit 1 (rpn-2) from Caenorhabditis elegans.